The chain runs to 426 residues: Actin-like protein 6B (426 aa).

The essential for mediating its function in dendritic development; may contribute to neuronal-specific targeting stretch occupies residues 39 to 82; it reads TTVGLLAAEEGGGLELEGDKEKKGKIFHIDTNALHVPRDGAEVM.

The protein belongs to the actin family. In terms of assembly, component of the multiprotein chromatin-remodeling complexes SWI/SNF: SWI/SNF-A (BAF), SWI/SNF-B (PBAF) and related complexes. The canonical complex contains a catalytic subunit (either SMARCA4/BRG1/BAF190A or SMARCA2/BRM/BAF190B) and at least SMARCE1, ACTL6A/BAF53, SMARCC1/BAF155, SMARCC2/BAF170 and SMARCB1/SNF5/BAF47. Other subunits specific to each of the complexes may also be present permitting several possible combinations developmentally and tissue specific. Component of the BAF complex, which includes at least actin (ACTB), ARID1A/BAF250A, ARID1B/BAF250B, SMARCA2/BRM, SMARCA4/BRG1/BAF190A, ACTL6A/BAF53, ACTL6B/BAF53B, SMARCE1/BAF57, SMARCC1/BAF155, SMARCC2/BAF170, SMARCB1/SNF5/INI1 and one or more SMARCD1/BAF60A, SMARCD2/BAF60B, or SMARCD3/BAF60C. Component of neuron-specific chromatin remodeling complex (nBAF complex) composed of at least, ARID1A/BAF250A or ARID1B/BAF250B, SMARCD1/BAF60A or SMARCD2/BAF60B or SMARCD3/BAF60C, SMARCA2/BRM/BAF190B, SMARCA4/BRG1/BAF190A, SMARCB1/BAF47, SMARCC1/BAF155, SMARCE1/BAF57, SMARCC2/BAF170, DPF1/BAF45B, DPF3/BAF45C, ACTL6B/BAF53B and actin (ACTB). Note that the nBAF complex is polymorphic in regard to the ATPase, SMARCA2 and SMARCA4 occupying mutually exclusive positions. May be a component of the SWI/SNF-B (PBAF) chromatin remodeling complex, at least composed of SMARCA4/BRG1, SMARCB1/BAF47/SNF5, ACTL6A/BAF53A or ACTL6B/BAF53B, SMARCE1/BAF57, SMARCD1/BAF60A, SMARCD2/BAF60B, perhaps SMARCD3/BAF60C, SMARCC1/BAF155, SMARCC2/BAF170, PBRM1/BAF180, ARID2/BAF200 and actin.

Its subcellular location is the nucleus. Functionally, involved in transcriptional activation and repression of select genes by chromatin remodeling (alteration of DNA-nucleosome topology). Component of SWI/SNF chromatin remodeling complexes that carry out key enzymatic activities, changing chromatin structure by altering DNA-histone contacts within a nucleosome in an ATP-dependent manner. Belongs to the neuron-specific chromatin remodeling complex (nBAF complex), as such plays a role in remodeling mononucleosomes in an ATP-dependent fashion, and is required for postmitotic neural development and dendritic outgrowth. During neural development a switch from a stem/progenitor to a postmitotic chromatin remodeling mechanism occurs as neurons exit the cell cycle and become committed to their adult state. The transition from proliferating neural stem/progenitor cells to postmitotic neurons requires a switch in subunit composition of the npBAF and nBAF complexes. As neural progenitors exit mitosis and differentiate into neurons, npBAF complexes which contain ACTL6A/BAF53A and PHF10/BAF45A, are exchanged for homologous alternative ACTL6B/BAF53B and DPF1/BAF45B or DPF3/BAF45C subunits in neuron-specific complexes (nBAF). The npBAF complex is essential for the self-renewal/proliferative capacity of the multipotent neural stem cells. The nBAF complex along with CREST plays a role regulating the activity of genes essential for dendrite growth. ACTL6B/BAF53B is not essential for assembly of the nBAF complex but is required for targeting the complex and CREST to the promoter of genes essential for dendritic growth. Essential for neuronal maturation and dendrite development. This chain is Actin-like protein 6B, found in Homo sapiens (Human).